Here is a 440-residue protein sequence, read N- to C-terminus: Trigger factor (440 aa).

The 86-residue stretch at 163-248 folds into the PPIase FKBP-type domain; sequence GDTVVIDFKG…VHEVKTKELP (86 aa).

Belongs to the FKBP-type PPIase family. Tig subfamily.

It is found in the cytoplasm. The enzyme catalyses [protein]-peptidylproline (omega=180) = [protein]-peptidylproline (omega=0). Its function is as follows. Involved in protein export. Acts as a chaperone by maintaining the newly synthesized protein in an open conformation. Functions as a peptidyl-prolyl cis-trans isomerase. This chain is Trigger factor, found in Lactiplantibacillus plantarum (strain ATCC BAA-793 / NCIMB 8826 / WCFS1) (Lactobacillus plantarum).